The primary structure comprises 555 residues: Hydroxylamine reductase (555 aa).

Residues C3, C6, C18, and C25 each coordinate [4Fe-4S] cluster. Residues H252, E276, C320, C407, C435, C460, E494, and K496 each coordinate hybrid [4Fe-2O-2S] cluster. Residue C407 is modified to Cysteine persulfide.

This sequence belongs to the HCP family. [4Fe-4S] cluster is required as a cofactor. Hybrid [4Fe-2O-2S] cluster serves as cofactor.

It localises to the cytoplasm. It carries out the reaction A + NH4(+) + H2O = hydroxylamine + AH2 + H(+). In terms of biological role, catalyzes the reduction of hydroxylamine to form NH(3) and H(2)O. The protein is Hydroxylamine reductase of Burkholderia lata (strain ATCC 17760 / DSM 23089 / LMG 22485 / NCIMB 9086 / R18194 / 383).